Reading from the N-terminus, the 123-residue chain is Small ribosomal subunit protein uS12 (123 aa).

The segment at 9–28 (RNGRKRATKKTTTPALKGAP) is disordered. The segment covering 18–27 (KTTTPALKGA) has biased composition (low complexity). A 3-methylthioaspartic acid modification is found at aspartate 89.

This sequence belongs to the universal ribosomal protein uS12 family. In terms of assembly, part of the 30S ribosomal subunit. Contacts proteins S8 and S17. May interact with IF1 in the 30S initiation complex.

Functionally, with S4 and S5 plays an important role in translational accuracy. Interacts with and stabilizes bases of the 16S rRNA that are involved in tRNA selection in the A site and with the mRNA backbone. Located at the interface of the 30S and 50S subunits, it traverses the body of the 30S subunit contacting proteins on the other side and probably holding the rRNA structure together. The combined cluster of proteins S8, S12 and S17 appears to hold together the shoulder and platform of the 30S subunit. The protein is Small ribosomal subunit protein uS12 of Desulfosudis oleivorans (strain DSM 6200 / JCM 39069 / Hxd3) (Desulfococcus oleovorans).